Here is a 704-residue protein sequence, read N- to C-terminus: RCC1 domain-containing protein DDB_G0295713 (704 aa).

RCC1 repeat units follow at residues 1–48 (MYCW…VKGE) and 69–120 (KNRC…ITDQ). Positions 221–246 (YNNNNNNNNNNNNNNNNNNNNNNNNN) are disordered. The segment covering 222 to 246 (NNNNNNNNNNNNNNNNNNNNNNNNN) has biased composition (low complexity). Residues 298–348 (QNQVYGWGENLNGQLGIEGIDYSTEPILIELPLVEIKHISSGAYHSAFVTN) form an RCC1 3 repeat. Residues 412–431 (IKDKNENNETKHTNKNKDNH) are compositionally biased toward basic and acidic residues. Positions 412-458 (IKDKNENNETKHTNKNKDNHDDDDESDHSDDDHHDDDDNDKDSQGIN) are disordered. Residues 432-451 (DDDDESDHSDDDHHDDDDND) are compositionally biased toward acidic residues. Residues 668-698 (IEQTSTQVANSENENENEIEMKMKMKKNEMK) are a coiled coil.

The sequence is that of RCC1 domain-containing protein DDB_G0295713 from Dictyostelium discoideum (Social amoeba).